We begin with the raw amino-acid sequence, 179 residues long: Peptidyl-prolyl cis-trans isomerase H (179 aa).

The region spanning Phe16–Glu178 is the PPIase cyclophilin-type domain.

It belongs to the cyclophilin-type PPIase family. PPIase H subfamily.

It is found in the nucleus. The catalysed reaction is [protein]-peptidylproline (omega=180) = [protein]-peptidylproline (omega=0). PPIases accelerate the folding of proteins. It catalyzes the cis-trans isomerization of proline imidic peptide bonds in oligopeptides. The chain is Peptidyl-prolyl cis-trans isomerase H (CYP3) from Cryptococcus neoformans var. neoformans serotype D (strain B-3501A) (Filobasidiella neoformans).